Here is an 86-residue protein sequence, read N- to C-terminus: Omega-theraphotoxin-Hhn1f 2 (86 aa).

Residues 1–21 (MKSIVFVALFGLALLAVVCSA) form the signal peptide. The propeptide occupies 22-50 (SEDAHKELLKEVVRAVVVDKTDAVQAEER). 3 cysteine pairs are disulfide-bonded: cysteine 52–cysteine 66, cysteine 59–cysteine 71, and cysteine 65–cysteine 78.

The protein belongs to the neurotoxin 10 (Hwtx-1) family. 17 (Hntx-9) subfamily. In terms of tissue distribution, expressed by the venom gland.

The protein localises to the secreted. Functionally, ion channel inhibitor. The sequence is that of Omega-theraphotoxin-Hhn1f 2 from Cyriopagopus hainanus (Chinese bird spider).